Consider the following 233-residue polypeptide: Translation initiation factor IF-3 (233 aa).

Disordered stretches follow at residues 1–21 (MAIQ…RTNR) and 184–233 (LQSQ…AAQR). Residues 193 to 211 (AAAAAAPAAAPAAPAAGAP) show a composition bias toward low complexity. Positions 212 to 223 (APAPAPAAPAPA) are enriched in pro residues. The segment covering 224–233 (PAAADPAAQR) has biased composition (low complexity).

The protein belongs to the IF-3 family. Monomer.

The protein localises to the cytoplasm. In terms of biological role, IF-3 binds to the 30S ribosomal subunit and shifts the equilibrium between 70S ribosomes and their 50S and 30S subunits in favor of the free subunits, thus enhancing the availability of 30S subunits on which protein synthesis initiation begins. In Anaeromyxobacter dehalogenans (strain 2CP-C), this protein is Translation initiation factor IF-3.